Here is a 176-residue protein sequence, read N- to C-terminus: Nucleoside triphosphate/diphosphate phosphatase (176 aa).

Arg-23 acts as the Proton donor in catalysis. Residues Asn-87, Asp-103, Asp-105, Asp-107, Asp-120, and Glu-123 each coordinate Mg(2+).

It belongs to the Ntdp family. Mg(2+) serves as cofactor.

The catalysed reaction is a ribonucleoside 5'-triphosphate + H2O = a ribonucleoside 5'-diphosphate + phosphate + H(+). It carries out the reaction a ribonucleoside 5'-diphosphate + H2O = a ribonucleoside 5'-phosphate + phosphate + H(+). Has nucleoside phosphatase activity towards nucleoside triphosphates and nucleoside diphosphates. The protein is Nucleoside triphosphate/diphosphate phosphatase of Bacillus velezensis (strain DSM 23117 / BGSC 10A6 / LMG 26770 / FZB42) (Bacillus amyloliquefaciens subsp. plantarum).